The primary structure comprises 423 residues: Serine--tRNA ligase (423 aa).

Residue 230 to 232 (TAE) coordinates L-serine. 261–263 (RAE) is an ATP binding site. E284 lines the L-serine pocket. Position 348–351 (348–351 (EISS)) interacts with ATP. Residue S384 participates in L-serine binding.

It belongs to the class-II aminoacyl-tRNA synthetase family. Type-1 seryl-tRNA synthetase subfamily. Homodimer. The tRNA molecule binds across the dimer.

The protein localises to the cytoplasm. The enzyme catalyses tRNA(Ser) + L-serine + ATP = L-seryl-tRNA(Ser) + AMP + diphosphate + H(+). It carries out the reaction tRNA(Sec) + L-serine + ATP = L-seryl-tRNA(Sec) + AMP + diphosphate + H(+). It participates in aminoacyl-tRNA biosynthesis; selenocysteinyl-tRNA(Sec) biosynthesis; L-seryl-tRNA(Sec) from L-serine and tRNA(Sec): step 1/1. In terms of biological role, catalyzes the attachment of serine to tRNA(Ser). Is also able to aminoacylate tRNA(Sec) with serine, to form the misacylated tRNA L-seryl-tRNA(Sec), which will be further converted into selenocysteinyl-tRNA(Sec). This is Serine--tRNA ligase from Acetivibrio thermocellus (strain ATCC 27405 / DSM 1237 / JCM 9322 / NBRC 103400 / NCIMB 10682 / NRRL B-4536 / VPI 7372) (Clostridium thermocellum).